Consider the following 434-residue polypeptide: D-amino acid dehydrogenase (434 aa).

3-17 is an FAD binding site; the sequence is VIILGGGVIGVTSAW.

The protein belongs to the DadA oxidoreductase family. Requires FAD as cofactor.

It catalyses the reaction a D-alpha-amino acid + A + H2O = a 2-oxocarboxylate + AH2 + NH4(+). The protein operates within amino-acid degradation; D-alanine degradation; NH(3) and pyruvate from D-alanine: step 1/1. Oxidative deamination of D-amino acids. The chain is D-amino acid dehydrogenase from Proteus mirabilis (strain HI4320).